Here is a 513-residue protein sequence, read N- to C-terminus: MSIKAEEISALIKQQLESYQDEISVEETGTVTYVGDGVARAHGLNNALQGELLLFDNGVYGMVQNLEASDVGIVILGDFTGITEGDTVKRTGRIMEVPVGDQLIGRVVNPLGQAIDGKGDISTDKTRPIEHKAPGVMDRQGVSEPLQTGIKAIDALVPIGRGQRELIIGDRKTGKSSIAIDTIINQKDQDMICIYVAIGQKASTVRAQVSTLEKFGAMDYTIVVTASPSEPAPMLYIAPYAGAAMGEEFMHNGKHVLIVYDDLTKQADAYRELSLILRRAPGREAYPGDIFYTHSRLLERAAKLNDELGGGSMTALPVIETKAGDVSAYIPTNVISITDGQIFLNSDSFYSGVRPAMDAGTSVSRVGGDAQIKAMKKVAGTLRLDLSAYKELESFAQFGSDLDAATQARLARGERTVEVLKQGLHESVPVAKEVIILFALTHGHLDKLEVADVLRYQNELFDYMDASHKDLEDSITTTGNLPEGNTLEDAIKEFDGMFQPTAKADDTAAQTAD.

Residue 169–176 coordinates ATP; sequence GDRKTGKS.

It belongs to the ATPase alpha/beta chains family. As to quaternary structure, F-type ATPases have 2 components, CF(1) - the catalytic core - and CF(0) - the membrane proton channel. CF(1) has five subunits: alpha(3), beta(3), gamma(1), delta(1), epsilon(1). CF(0) has three main subunits: a(1), b(2) and c(9-12). The alpha and beta chains form an alternating ring which encloses part of the gamma chain. CF(1) is attached to CF(0) by a central stalk formed by the gamma and epsilon chains, while a peripheral stalk is formed by the delta and b chains.

The protein resides in the cell membrane. The catalysed reaction is ATP + H2O + 4 H(+)(in) = ADP + phosphate + 5 H(+)(out). Its function is as follows. Produces ATP from ADP in the presence of a proton gradient across the membrane. The alpha chain is a regulatory subunit. The chain is ATP synthase subunit alpha from Levilactobacillus brevis (strain ATCC 367 / BCRC 12310 / CIP 105137 / JCM 1170 / LMG 11437 / NCIMB 947 / NCTC 947) (Lactobacillus brevis).